The chain runs to 236 residues: 2-C-methyl-D-erythritol 4-phosphate cytidylyltransferase (236 aa).

Belongs to the IspD/TarI cytidylyltransferase family. IspD subfamily. Homodimer.

The catalysed reaction is 2-C-methyl-D-erythritol 4-phosphate + CTP + H(+) = 4-CDP-2-C-methyl-D-erythritol + diphosphate. The protein operates within isoprenoid biosynthesis; isopentenyl diphosphate biosynthesis via DXP pathway; isopentenyl diphosphate from 1-deoxy-D-xylulose 5-phosphate: step 2/6. Catalyzes the formation of 4-diphosphocytidyl-2-C-methyl-D-erythritol from CTP and 2-C-methyl-D-erythritol 4-phosphate (MEP). The polypeptide is 2-C-methyl-D-erythritol 4-phosphate cytidylyltransferase (Salmonella newport (strain SL254)).